The primary structure comprises 542 residues: Protein XP55 (542 aa).

An N-terminal signal peptide occupies residues 1 to 33 (MTARRTRWTRRTDRSLPIRSAAAAVAFAAGATA). A lipid anchor (N-palmitoyl cysteine) is attached at Cys34. Cys34 carries S-diacylglycerol cysteine lipidation. The disordered stretch occupies residues 519-542 (LEGRTNTASPAGPGGTSRTGGRKK).

Belongs to the bacterial solute-binding protein 5 family.

Its subcellular location is the cell membrane. Functionally, required for transport of an unidentified substrate. The polypeptide is Protein XP55 (xp55) (Streptomyces lividans).